Reading from the N-terminus, the 97-residue chain is Small ribosomal subunit protein bS20 (97 aa).

This sequence belongs to the bacterial ribosomal protein bS20 family.

Binds directly to 16S ribosomal RNA. The protein is Small ribosomal subunit protein bS20 of Synechocystis sp. (strain ATCC 27184 / PCC 6803 / Kazusa).